The chain runs to 331 residues: Lipoyl synthase (331 aa).

Residues 1–14 show a composition bias toward polar residues; the sequence is MSTQLDASQPSNDV. Residues 1-32 form a disordered region; the sequence is MSTQLDASQPSNDVASPAAYDPTQKQKSQAKT. Residues C78, C83, C89, C104, C108, C111, and S318 each contribute to the [4Fe-4S] cluster site. The Radical SAM core domain maps to 89-307; that stretch reads CFGKGTATFM…EREAYAMGFS (219 aa).

This sequence belongs to the radical SAM superfamily. Lipoyl synthase family. [4Fe-4S] cluster serves as cofactor.

It localises to the cytoplasm. The catalysed reaction is [[Fe-S] cluster scaffold protein carrying a second [4Fe-4S](2+) cluster] + N(6)-octanoyl-L-lysyl-[protein] + 2 oxidized [2Fe-2S]-[ferredoxin] + 2 S-adenosyl-L-methionine + 4 H(+) = [[Fe-S] cluster scaffold protein] + N(6)-[(R)-dihydrolipoyl]-L-lysyl-[protein] + 4 Fe(3+) + 2 hydrogen sulfide + 2 5'-deoxyadenosine + 2 L-methionine + 2 reduced [2Fe-2S]-[ferredoxin]. It participates in protein modification; protein lipoylation via endogenous pathway; protein N(6)-(lipoyl)lysine from octanoyl-[acyl-carrier-protein]: step 2/2. Its function is as follows. Catalyzes the radical-mediated insertion of two sulfur atoms into the C-6 and C-8 positions of the octanoyl moiety bound to the lipoyl domains of lipoate-dependent enzymes, thereby converting the octanoylated domains into lipoylated derivatives. The sequence is that of Lipoyl synthase from Bordetella avium (strain 197N).